Consider the following 286-residue polypeptide: Ribosome-inactivating protein beta-momorcharin (286 aa).

Residues 1 to 23 (MVKCLLLSFLIIAIFIGVPTAKG) form the signal peptide. A glycan (N-linked (GlcNAc...) asparagine) is linked at asparagine 74. Catalysis depends on residues tyrosine 93, tyrosine 132, glutamate 181, and arginine 184.

The protein belongs to the ribosome-inactivating protein family. Type 1 RIP subfamily. In terms of processing, bound to a branched hexasaccharide.

The catalysed reaction is Endohydrolysis of the N-glycosidic bond at one specific adenosine on the 28S rRNA.. Functionally, irreversibly relaxes supercoiled DNA and catalyzes double-stranded breakage. Also acts as a ribosome inactivating protein. The polypeptide is Ribosome-inactivating protein beta-momorcharin (MAP30) (Momordica charantia (Bitter gourd)).